We begin with the raw amino-acid sequence, 133 residues long: Aspartate 1-decarboxylase (133 aa).

Residue serine 26 is the Schiff-base intermediate with substrate; via pyruvic acid of the active site. At serine 26 the chain carries Pyruvic acid (Ser). Substrate is bound at residue threonine 58. The active-site Proton donor is the tyrosine 59. Glycine 74 to alanine 76 contacts substrate.

This sequence belongs to the PanD family. As to quaternary structure, heterooctamer of four alpha and four beta subunits. Pyruvate serves as cofactor. Is synthesized initially as an inactive proenzyme, which is activated by self-cleavage at a specific serine bond to produce a beta-subunit with a hydroxyl group at its C-terminus and an alpha-subunit with a pyruvoyl group at its N-terminus.

Its subcellular location is the cytoplasm. The enzyme catalyses L-aspartate + H(+) = beta-alanine + CO2. Its pathway is cofactor biosynthesis; (R)-pantothenate biosynthesis; beta-alanine from L-aspartate: step 1/1. Catalyzes the pyruvoyl-dependent decarboxylation of aspartate to produce beta-alanine. This Legionella pneumophila (strain Lens) protein is Aspartate 1-decarboxylase.